A 155-amino-acid chain; its full sequence is Microsomal glutathione S-transferase 1 (155 aa).

Over 3–9 the chain is Lumenal; it reads NLSQLME. Residues 10 to 33 form a helical membrane-spanning segment; that stretch reads NEVFMAFASYTTIVLSKMNFMSTA. The Cytoplasmic segment spans residues 34-62; it reads TAFYRLTKKVFANPEDCAGFGKGENAKKY. Glutathione is bound at residue arginine 38. N6-acetyllysine occurs at positions 42, 55, and 60. Residues 63-96 traverse the membrane as a helical segment; that stretch reads LRTDDRVERVRRAHLNDLENIVPFLGIGLLYSLS. Glutathione is bound by residues arginine 73, arginine 74, histidine 76, and glutamate 81. At 97–99 the chain is on the lumenal side; sequence GPD. A helical transmembrane segment spans residues 100–123; that stretch reads LSTAILHFRLFVRARIYHTIAYLT. Tyrosine 121 lines the glutathione pocket. Residues 124-128 lie on the Cytoplasmic side of the membrane; it reads PLPQP. The chain crosses the membrane as a helical span at residues 129-148; the sequence is NRALAFFIGYGVTLSMAYRL. At 149–155 the chain is on the lumenal side; the sequence is LKSKLYL.

It belongs to the MAPEG family. As to quaternary structure, homotrimer; The trimer binds only one molecule of glutathione.

The protein localises to the endoplasmic reticulum membrane. The protein resides in the mitochondrion outer membrane. The catalysed reaction is RX + glutathione = an S-substituted glutathione + a halide anion + H(+). Its function is as follows. Conjugation of reduced glutathione to a wide number of exogenous and endogenous hydrophobic electrophiles. This Bos taurus (Bovine) protein is Microsomal glutathione S-transferase 1 (MGST1).